Here is a 101-residue protein sequence, read N- to C-terminus: Small ribosomal subunit protein uS14m (101 aa).

It belongs to the universal ribosomal protein uS14 family. In terms of assembly, component of the mitochondrial ribosome small subunit (28S) which comprises a 12S rRNA and about 30 distinct proteins. Interacts with LIAT1.

It is found in the mitochondrion. The polypeptide is Small ribosomal subunit protein uS14m (mrps14) (Dictyostelium citrinum (Slime mold)).